Here is a 322-residue protein sequence, read N- to C-terminus: ATP-dependent 6-phosphofructokinase (322 aa).

An ATP-binding site is contributed by glycine 11. 21-25 (RAVTR) is an ADP binding site. ATP-binding positions include 72 to 73 (RC) and 102 to 105 (GDGS). Aspartate 103 is a binding site for Mg(2+). Residue 127 to 129 (TID) participates in substrate binding. Aspartate 129 functions as the Proton acceptor in the catalytic mechanism. ADP is bound at residue arginine 156. Substrate is bound by residues arginine 164 and 171 to 173 (MGR). ADP-binding positions include 187 to 189 (GAE), arginine 213, and 215 to 217 (KKH). Substrate contacts are provided by residues glutamate 224, arginine 245, and 251-254 (HIQR).

The protein belongs to the phosphofructokinase type A (PFKA) family. ATP-dependent PFK group I subfamily. Prokaryotic clade 'B1' sub-subfamily. Homotetramer. Mg(2+) serves as cofactor.

It localises to the cytoplasm. The catalysed reaction is beta-D-fructose 6-phosphate + ATP = beta-D-fructose 1,6-bisphosphate + ADP + H(+). It functions in the pathway carbohydrate degradation; glycolysis; D-glyceraldehyde 3-phosphate and glycerone phosphate from D-glucose: step 3/4. With respect to regulation, allosterically activated by ADP and other diphosphonucleosides, and allosterically inhibited by phosphoenolpyruvate. In terms of biological role, catalyzes the phosphorylation of D-fructose 6-phosphate to fructose 1,6-bisphosphate by ATP, the first committing step of glycolysis. This Staphylococcus epidermidis (strain ATCC 35984 / DSM 28319 / BCRC 17069 / CCUG 31568 / BM 3577 / RP62A) protein is ATP-dependent 6-phosphofructokinase.